A 339-amino-acid polypeptide reads, in one-letter code: Dihydroorotate dehydrogenase (quinone) (339 aa).

FMN contacts are provided by residues 62-66 (AGMDK) and threonine 86. Lysine 66 is a binding site for substrate. 111 to 115 (NRMGF) provides a ligand contact to substrate. Residues asparagine 139 and asparagine 172 each coordinate FMN. Asparagine 172 contacts substrate. Serine 175 serves as the catalytic Nucleophile. Residue asparagine 177 coordinates substrate. FMN is bound by residues lysine 217 and threonine 245. 246 to 247 (NT) contacts substrate. FMN-binding positions include glycine 268, glycine 297, and 318-319 (YS).

It belongs to the dihydroorotate dehydrogenase family. Type 2 subfamily. Monomer. The cofactor is FMN.

The protein localises to the cell membrane. It catalyses the reaction (S)-dihydroorotate + a quinone = orotate + a quinol. It participates in pyrimidine metabolism; UMP biosynthesis via de novo pathway; orotate from (S)-dihydroorotate (quinone route): step 1/1. Functionally, catalyzes the conversion of dihydroorotate to orotate with quinone as electron acceptor. The sequence is that of Dihydroorotate dehydrogenase (quinone) from Shewanella pealeana (strain ATCC 700345 / ANG-SQ1).